A 416-amino-acid polypeptide reads, in one-letter code: Gamma-glutamyl phosphate reductase (416 aa).

This sequence belongs to the gamma-glutamyl phosphate reductase family.

The protein resides in the cytoplasm. It catalyses the reaction L-glutamate 5-semialdehyde + phosphate + NADP(+) = L-glutamyl 5-phosphate + NADPH + H(+). It participates in amino-acid biosynthesis; L-proline biosynthesis; L-glutamate 5-semialdehyde from L-glutamate: step 2/2. Its function is as follows. Catalyzes the NADPH-dependent reduction of L-glutamate 5-phosphate into L-glutamate 5-semialdehyde and phosphate. The product spontaneously undergoes cyclization to form 1-pyrroline-5-carboxylate. This Streptococcus thermophilus (strain CNRZ 1066) protein is Gamma-glutamyl phosphate reductase.